Here is a 116-residue protein sequence, read N- to C-terminus: Protein Rev (116 aa).

Ser-8 bears the Phosphoserine; by host CK2 mark. The tract at residues 18–26 (LIKSLYQSN) is homomultimerization. Disordered regions lie at residues 20 to 46 (KSLYQSNPPPSPEGTRQARRNRRRRWR) and 84 to 116 (DSSEDCGTSGTQGVGSPQVLVESPAVLESGAKE). A Nuclear localization signal and RNA-binding (RRE) motif is present at residues 34–50 (TRQARRNRRRRWRERQR). The segment covering 36–46 (QARRNRRRRWR) has biased composition (basic residues). The Nuclear export signal and binding to XPO1 signature appears at 73 to 84 (LQLPPLERLTLD). A compositionally biased stretch (polar residues) spans 88 to 98 (DCGTSGTQGVG). Phosphoserine; by host occurs at positions 92 and 99.

Belongs to the HIV-1 REV protein family. In terms of assembly, homomultimer; when bound to the RRE. Multimeric assembly is essential for activity and may involve XPO1. Binds to human KPNB1, XPO1, TNPO1, RANBP5 and IPO7. Interacts with the viral Integrase. Interacts with human KHDRBS1. Interacts with human NAP1; this interaction decreases Rev multimerization and stimulates its activity. Interacts with human DEAD-box helicases DDX3 and DDX24; these interactions may serve for viral RNA export to the cytoplasm and packaging, respectively. Interacts with human PSIP1; this interaction may inhibit HIV-1 DNA integration by promoting dissociation of the Integrase-LEDGF/p75 complex. Post-translationally, asymmetrically arginine dimethylated at one site by host PRMT6. Methylation impairs the RNA-binding activity and export of viral RNA from the nucleus to the cytoplasm. Phosphorylated by protein kinase CK2. Presence of, and maybe binding to the N-terminus of the regulatory beta subunit of CK2 is necessary for CK2-mediated Rev's phosphorylation.

It localises to the host nucleus. The protein resides in the host nucleolus. Its subcellular location is the host cytoplasm. Functionally, escorts unspliced or incompletely spliced viral pre-mRNAs (late transcripts) out of the nucleus of infected cells. These pre-mRNAs carry a recognition sequence called Rev responsive element (RRE) located in the env gene, that is not present in fully spliced viral mRNAs (early transcripts). This function is essential since most viral proteins are translated from unspliced or partially spliced pre-mRNAs which cannot exit the nucleus by the pathway used by fully processed cellular mRNAs. Rev itself is translated from a fully spliced mRNA that readily exits the nucleus. Rev's nuclear localization signal (NLS) binds directly to KPNB1/Importin beta-1 without previous binding to KPNA1/Importin alpha-1. KPNB1 binds to the GDP bound form of RAN (Ran-GDP) and targets Rev to the nucleus. In the nucleus, the conversion from Ran-GDP to Ran-GTP dissociates Rev from KPNB1 and allows Rev's binding to the RRE in viral pre-mRNAs. Rev multimerization on the RRE via cooperative assembly exposes its nuclear export signal (NES) to the surface. Rev can then form a complex with XPO1/CRM1 and Ran-GTP, leading to nuclear export of the complex. Conversion from Ran-GTP to Ran-GDP mediates dissociation of the Rev/RRE/XPO1/RAN complex, so that Rev can return to the nucleus for a subsequent round of export. Beside KPNB1, also seems to interact with TNPO1/Transportin-1, RANBP5/IPO5 and IPO7/RANBP7 for nuclear import. The nucleoporin-like HRB/RIP is an essential cofactor that probably indirectly interacts with Rev to release HIV RNAs from the perinuclear region to the cytoplasm. The protein is Protein Rev of Human immunodeficiency virus type 1 group M subtype B (isolate RF/HAT3) (HIV-1).